The primary structure comprises 249 residues: Aspartate/glutamate leucyltransferase (249 aa).

Belongs to the R-transferase family. Bpt subfamily.

It localises to the cytoplasm. The enzyme catalyses N-terminal L-glutamyl-[protein] + L-leucyl-tRNA(Leu) = N-terminal L-leucyl-L-glutamyl-[protein] + tRNA(Leu) + H(+). It catalyses the reaction N-terminal L-aspartyl-[protein] + L-leucyl-tRNA(Leu) = N-terminal L-leucyl-L-aspartyl-[protein] + tRNA(Leu) + H(+). Its function is as follows. Functions in the N-end rule pathway of protein degradation where it conjugates Leu from its aminoacyl-tRNA to the N-termini of proteins containing an N-terminal aspartate or glutamate. In Xanthobacter autotrophicus (strain ATCC BAA-1158 / Py2), this protein is Aspartate/glutamate leucyltransferase.